The sequence spans 288 residues: Pantothenate synthetase (288 aa).

Residue 30 to 37 (MGNLHEGH) coordinates ATP. Residue H37 is the Proton donor of the active site. Q61 contributes to the (R)-pantoate binding site. Beta-alanine is bound at residue Q61. 148-151 (GQKD) contributes to the ATP binding site. Position 154 (Q154) interacts with (R)-pantoate. ATP is bound by residues V177 and 185 to 188 (LSSR).

The protein belongs to the pantothenate synthetase family. In terms of assembly, homodimer.

It localises to the cytoplasm. It catalyses the reaction (R)-pantoate + beta-alanine + ATP = (R)-pantothenate + AMP + diphosphate + H(+). Its pathway is cofactor biosynthesis; (R)-pantothenate biosynthesis; (R)-pantothenate from (R)-pantoate and beta-alanine: step 1/1. Functionally, catalyzes the condensation of pantoate with beta-alanine in an ATP-dependent reaction via a pantoyl-adenylate intermediate. In Psychrobacter arcticus (strain DSM 17307 / VKM B-2377 / 273-4), this protein is Pantothenate synthetase.